We begin with the raw amino-acid sequence, 264 residues long: Vitellin-degrading protease (264 aa).

The N-terminal stretch at 1–15 is a signal peptide; that stretch reads MTNSLLICFTILGLA. Positions 16–27 are cleaved as a propeptide — activation peptide; the sequence is ASSPTKPIGDIR. Residues 28-253 form the Peptidase S1 domain; that stretch reads IVGGEDIVIT…LREWVDENIT (226 aa). Cysteine 53 and cysteine 69 are disulfide-bonded. Catalysis depends on charge relay system residues histidine 68 and aspartate 113. The cysteines at positions 178 and 194 are disulfide-linked. A substrate-binding site is contributed by aspartate 203. Residues cysteine 205 and cysteine 229 are joined by a disulfide bond. Serine 209 serves as the catalytic Charge relay system. Residue asparagine 251 is glycosylated (N-linked (GlcNAc...) asparagine).

Belongs to the peptidase S1 family. Cleavage after Arg-27 leads to beta-VTN protease and subsequent cleavage after Arg-89 leads to alpha-VTN.

Responsible for the degradation of vitellin in eggs at the head pigmentation stage. In Bombyx mori (Silk moth), this protein is Vitellin-degrading protease.